A 434-amino-acid chain; its full sequence is 5-methylthioadenosine/S-adenosylhomocysteine deaminase (434 aa).

Zn(2+) contacts are provided by His-66 and His-68. Residues Glu-95, Arg-148, and His-188 each contribute to the substrate site. His-215 is a binding site for Zn(2+). Substrate is bound by residues Glu-218 and Asp-304. Asp-304 is a binding site for Zn(2+).

The protein belongs to the metallo-dependent hydrolases superfamily. MTA/SAH deaminase family. It depends on Zn(2+) as a cofactor.

The catalysed reaction is S-adenosyl-L-homocysteine + H2O + H(+) = S-inosyl-L-homocysteine + NH4(+). It catalyses the reaction S-methyl-5'-thioadenosine + H2O + H(+) = S-methyl-5'-thioinosine + NH4(+). Its function is as follows. Catalyzes the deamination of 5-methylthioadenosine and S-adenosyl-L-homocysteine into 5-methylthioinosine and S-inosyl-L-homocysteine, respectively. Is also able to deaminate adenosine. This is 5-methylthioadenosine/S-adenosylhomocysteine deaminase from Shouchella clausii (strain KSM-K16) (Alkalihalobacillus clausii).